The sequence spans 507 residues: Heat shock 70 kDa protein 14-B (507 aa).

Belongs to the heat shock protein 70 family. Component of ribosome-associated complex (RAC).

Its subcellular location is the cytoplasm. It is found in the cytosol. Functionally, component of the ribosome-associated complex (RAC), a complex involved in folding or maintaining nascent polypeptides in a folding-competent state. This Xenopus laevis (African clawed frog) protein is Heat shock 70 kDa protein 14-B (hspa14-b).